Consider the following 24-residue polypeptide: Ascaphin-4 (24 aa).

As to expression, expressed by the skin glands.

The protein localises to the secreted. Functionally, antimicrobial peptide that shows higher potency against Gram-negative bacteria than against Gram-positive bacteria. Has a very week hemolytic activity. This Ascaphus truei (Coastal tailed frog) protein is Ascaphin-4.